Reading from the N-terminus, the 348-residue chain is Protein RecA (348 aa).

Position 65 to 72 (65 to 72 (GPESSGKT)) interacts with ATP.

The protein belongs to the RecA family.

Its subcellular location is the cytoplasm. Its function is as follows. Can catalyze the hydrolysis of ATP in the presence of single-stranded DNA, the ATP-dependent uptake of single-stranded DNA by duplex DNA, and the ATP-dependent hybridization of homologous single-stranded DNAs. It interacts with LexA causing its activation and leading to its autocatalytic cleavage. The chain is Protein RecA from Alteromonas mediterranea (strain DSM 17117 / CIP 110805 / LMG 28347 / Deep ecotype).